We begin with the raw amino-acid sequence, 179 residues long: TPD1 protein homolog 1 (179 aa).

A signal peptide spans 1–30 (MRMEHIYKFQHWLFFIGLGVLLSLSLSVKA).

The chain is TPD1 protein homolog 1 from Arabidopsis thaliana (Mouse-ear cress).